A 225-amino-acid chain; its full sequence is Jeltraxin (225 aa).

The signal sequence occupies residues 1–19; it reads MKGLVIFFCLFYGCHVAGA. Residues 21–223 form the Pentraxin (PTX) domain; sequence GKTIMLFPQK…IVVLRNQFIP (203 aa). A disulfide bridge links Cys-51 with Cys-112. Positions 75 and 76 each coordinate Ca(2+). Asn-87 carries an N-linked (GlcNAc...) asparagine glycan. Residues Glu-153, Gln-154, Asp-155, and Gln-165 each contribute to the Ca(2+) site. A glycan (N-linked (GlcNAc...) asparagine) is linked at Asn-207.

In terms of assembly, homodecamer consisting of two homopentamer units. Pentraxin (or pentaxin) have a discoid arrangement of 5 non-covalently bound subunits. Requires Ca(2+) as cofactor. Post-translationally, glycosylated. As to expression, oviduct. Highest expression levels were detected in the pars convoluta with lower levels detected in the pars recta. No expression was detected in the pars uterina.

It is found in the secreted. In terms of biological role, calcium-dependent beta-galactose specific lectin. This is Jeltraxin from Lepidobatrachus laevis (Budgett's frog).